A 394-amino-acid polypeptide reads, in one-letter code: Guanine nucleotide-binding protein G(s) subunit alpha (394 aa).

Residues 1–23 (MGCLGNSKTEDQRNEEKAQREAN) form a disordered region. The N-palmitoyl glycine moiety is linked to residue Gly2. Cys3 carries the S-palmitoyl cysteine lipid modification. Over residues 8–23 (KTEDQRNEEKAQREAN) the composition is skewed to basic and acidic residues. In terms of domain architecture, G-alpha spans 39 to 394 (ATHRLLLLGA…RMHLRQYELL (356 aa)). Residues 42–55 (RLLLLGAGESGKST) form a G1 motif region. 47 to 55 (GAGESGKST) provides a ligand contact to GTP. Ser54 is a binding site for Mg(2+). Positions 68 to 90 (FNGEGGEEDPQAARSNSDGEKAT) are disordered. Positions 196–204 (DLLRCRVLT) are G2 motif. Residues 197–204 (LLRCRVLT), 223–227 (DVGGQ), 292–295 (NKQD), and Ala366 contribute to the GTP site. Thr204 serves as a coordination point for Mg(2+). The tract at residues 219-228 (FHMFDVGGQR) is G3 motif. A G4 motif region spans residues 288–295 (ILFLNKQD). A G5 motif region spans residues 364 to 369 (TCAVDT).

This sequence belongs to the G-alpha family. G(s) subfamily. As to quaternary structure, heterotrimeric G proteins are composed of 3 units; alpha, beta and gamma. The alpha chain contains the guanine nucleotide binding site. Interacts with CRY1; the interaction may block GPCR-mediated regulation of cAMP concentrations. Interacts with ADCY6 and stimulates its adenylyl cyclase activity. Interacts with ADCY2 and ADCY5. Stimulates the ADCY5 adenylyl cyclase activity. Interaction with SASH1.

The protein resides in the cell membrane. Functionally, guanine nucleotide-binding proteins (G proteins) function as transducers in numerous signaling pathways controlled by G protein-coupled receptors (GPCRs). Signaling involves the activation of adenylyl cyclases, resulting in increased levels of the signaling molecule cAMP. GNAS functions downstream of several GPCRs, including beta-adrenergic receptors. Stimulates the Ras signaling pathway via RAPGEF2. This chain is Guanine nucleotide-binding protein G(s) subunit alpha (GNAS), found in Cricetulus griseus (Chinese hamster).